The sequence spans 252 residues: Chlorophyll a-b binding protein P4, chloroplastic (252 aa).

W56 contributes to the chlorophyll b binding site. Chlorophyll a is bound by residues F76 and E95. Chlorophyll b is bound at residue R100. A run of 2 helical transmembrane segments spans residues 101–121 (WAMLGVAGMLLPEVFTSIGII) and 134–154 (YFASSSTLFVIEFILSHYVEI). S137, V143, E153, and R156 together coordinate chlorophyll b. Positions 203, 204, 207, 209, 221, and 236 each coordinate chlorophyll a.

Belongs to the light-harvesting chlorophyll a/b-binding (LHC) protein family. The LHC complex consists of chlorophyll a-b binding proteins. Binds at least 14 chlorophylls (8 Chl-a and 6 Chl-b) and carotenoids such as lutein and neoxanthin. serves as cofactor. Post-translationally, photoregulated by reversible phosphorylation of its threonine residues.

The protein localises to the plastid. It localises to the chloroplast thylakoid membrane. In terms of biological role, the light-harvesting complex (LHC) functions as a light receptor, it captures and delivers excitation energy to photosystems with which it is closely associated. Its function is as follows. May channel protons produced in the catalytic Mn center of water oxidation into the thylakoid lumen. The protein is Chlorophyll a-b binding protein P4, chloroplastic of Pisum sativum (Garden pea).